The primary structure comprises 203 residues: MTAIKELKAVARPRAGKGAARAERRAGRVPAVIYGEKQEPVTISLNFREINKTIYAGHFLTTLFEIDVDGTKHRVIPRDYQLDVVKDFPLHVDFLRVSQGATVTVEVPVHFLNQEASPALKAGGTLNVVAHAVELECPAESIPASVEVDLTGAAYGDTFHLSGIKLPAGVTWAGHGDDTLATVVAPSGQADAAAEDAAEAAKA.

This sequence belongs to the bacterial ribosomal protein bL25 family. CTC subfamily. In terms of assembly, part of the 50S ribosomal subunit; part of the 5S rRNA/L5/L18/L25 subcomplex. Contacts the 5S rRNA. Binds to the 5S rRNA independently of L5 and L18.

Functionally, this is one of the proteins that binds to the 5S RNA in the ribosome where it forms part of the central protuberance. The chain is Large ribosomal subunit protein bL25 from Xanthobacter autotrophicus (strain ATCC BAA-1158 / Py2).